Consider the following 570-residue polypeptide: Protein NRT1/ PTR FAMILY 8.2 (570 aa).

Position 99 is a phosphothreonine (threonine 99). 10 consecutive transmembrane segments (helical) span residues 100–120 (IASFVVIYIAGMTLLTISASV), 136–156 (AGQTAITFIALYLIALGTGGI), 182–202 (FFNWFYFVINVGAMIASSVLV), 210–230 (WGWGLGVPTVAMAIAVVFFFA), 335–355 (IWATGIVFASVYSQMGTVFVL), 370–390 (IPSASLSLFDTLSVLFWAPVY), 414–434 (IGIGLVISIFSMVSAGILEVA), 454–474 (IFWQVPQYFLVGCAEVFTFIG), 493–513 (ALSLTAIAFGNYLSTFLVTLV), and 537–557 (YFFWLLAGLSFLNFLVYLWIA).

It belongs to the major facilitator superfamily. Proton-dependent oligopeptide transporter (POT/PTR) (TC 2.A.17) family. In terms of tissue distribution, expressed in developing and germinating pollen grains and ovules.

The protein localises to the cell membrane. In terms of biological role, peptide transporter. Mediates the transport of di- and tripeptides. High affinity transporter. Involved in the uptake of peptides during pollen germination and tube growth. The sequence is that of Protein NRT1/ PTR FAMILY 8.2 (NPF8.2) from Arabidopsis thaliana (Mouse-ear cress).